Reading from the N-terminus, the 213-residue chain is Maleamate amidohydrolase (213 aa).

Cys154 (nucleophile) is an active-site residue.

It belongs to the isochorismatase family.

The catalysed reaction is maleamate + H2O = maleate + NH4(+). It participates in cofactor degradation; nicotinate degradation. Functionally, maleamate amidase that transforms maleamate into maleate and ammonia in the aerobic nicotinate degradation pathway. The protein is Maleamate amidohydrolase (nicF) of Pseudomonas putida (strain ATCC 47054 / DSM 6125 / CFBP 8728 / NCIMB 11950 / KT2440).